The primary structure comprises 309 residues: Malate dehydrogenase (309 aa).

Residues 10–15 and aspartate 34 contribute to the NAD(+) site; that span reads GAGNVG. Residues arginine 83 and arginine 89 each contribute to the substrate site. Residues asparagine 96 and 119–121 contribute to the NAD(+) site; that span reads VTN. Residues asparagine 121 and arginine 152 each contribute to the substrate site. Catalysis depends on histidine 176, which acts as the Proton acceptor.

It belongs to the LDH/MDH superfamily. MDH type 3 family.

The catalysed reaction is (S)-malate + NAD(+) = oxaloacetate + NADH + H(+). Catalyzes the reversible oxidation of malate to oxaloacetate. The chain is Malate dehydrogenase from Desulforudis audaxviator (strain MP104C).